The sequence spans 141 residues: Putative RING-H2 finger protein ATL62 (141 aa).

The helical transmembrane segment at 14–32 (FFAILTVFYSIFRCCLAYC) threads the bilayer. The segment at 79–121 (CVVCLSKFIDEDKARVLPSCNHCFHFDFTDTWLHSDYTCPNCR) adopts an RING-type; degenerate zinc-finger fold.

The protein belongs to the RING-type zinc finger family. ATL subfamily.

Its subcellular location is the membrane. The enzyme catalyses S-ubiquitinyl-[E2 ubiquitin-conjugating enzyme]-L-cysteine + [acceptor protein]-L-lysine = [E2 ubiquitin-conjugating enzyme]-L-cysteine + N(6)-ubiquitinyl-[acceptor protein]-L-lysine.. The protein operates within protein modification; protein ubiquitination. This chain is Putative RING-H2 finger protein ATL62 (ATL62), found in Arabidopsis thaliana (Mouse-ear cress).